We begin with the raw amino-acid sequence, 285 residues long: Protein HtrL (285 aa).

The protein is Protein HtrL of Escherichia coli (strain K12).